The sequence spans 206 residues: Protein DEHYDRATION-INDUCED 19 (206 aa).

Residue Thr-105 is modified to Phosphothreonine. Ser-107 carries the phosphoserine modification. The interval 142-167 is disordered; sequence SSFISPTRSQSSPAPRQTKNVSEDKQ. Polar residues predominate over residues 143 to 161; sequence SFISPTRSQSSPAPRQTKN.

This sequence belongs to the Di19 family. In terms of assembly, interacts with ADO2/LKP2, CPK11 and CPK4. Weak interaction with CPK12 and no interactions with CPK1, CPK5 or CPK26. In terms of processing, phosphorylated within the NLS/NES region. In terms of tissue distribution, expressed in seedlings, roots, leaves, stems, flowers and siliques.

Its subcellular location is the nucleus. The polypeptide is Protein DEHYDRATION-INDUCED 19 (DI19-1) (Arabidopsis thaliana (Mouse-ear cress)).